The sequence spans 320 residues: Ferrochelatase (320 aa).

2 residues coordinate Fe cation: His194 and Glu275.

This sequence belongs to the ferrochelatase family. In terms of assembly, monomer.

Its subcellular location is the cytoplasm. The enzyme catalyses heme b + 2 H(+) = protoporphyrin IX + Fe(2+). The protein operates within porphyrin-containing compound metabolism; protoheme biosynthesis; protoheme from protoporphyrin-IX: step 1/1. Catalyzes the ferrous insertion into protoporphyrin IX. This chain is Ferrochelatase, found in Salmonella schwarzengrund (strain CVM19633).